A 41-amino-acid polypeptide reads, in one-letter code: Large ribosomal subunit protein bL36 (41 aa).

Belongs to the bacterial ribosomal protein bL36 family.

In Cereibacter sphaeroides (strain ATCC 17029 / ATH 2.4.9) (Rhodobacter sphaeroides), this protein is Large ribosomal subunit protein bL36.